We begin with the raw amino-acid sequence, 183 residues long: Ribosome maturation factor RimM (183 aa).

In terms of domain architecture, PRC barrel spans 95–171 (DPDEFYDHEL…VVVIDPPEGL (77 aa)).

This sequence belongs to the RimM family. Binds ribosomal protein uS19.

Its subcellular location is the cytoplasm. In terms of biological role, an accessory protein needed during the final step in the assembly of 30S ribosomal subunit, possibly for assembly of the head region. Essential for efficient processing of 16S rRNA. May be needed both before and after RbfA during the maturation of 16S rRNA. It has affinity for free ribosomal 30S subunits but not for 70S ribosomes. The protein is Ribosome maturation factor RimM of Rhodococcus opacus (strain B4).